The primary structure comprises 310 residues: L-lactate dehydrogenase (310 aa).

Residues 10-11, D32, Y62, and 76-77 each bind NAD(+); these read MV and GV. Substrate contacts are provided by residues Q79, R85, and 117–120; that span reads NPVD. NAD(+) is bound by residues 115–117 and S140; that span reads ATN. 145–148 is a substrate binding site; the sequence is DTAR. Residues R150 and H165 each coordinate beta-D-fructose 1,6-bisphosphate. H172 acts as the Proton acceptor in catalysis. Y218 carries the post-translational modification Phosphotyrosine. T227 contacts substrate.

Belongs to the LDH/MDH superfamily. LDH family. As to quaternary structure, homotetramer.

Its subcellular location is the cytoplasm. It carries out the reaction (S)-lactate + NAD(+) = pyruvate + NADH + H(+). The protein operates within fermentation; pyruvate fermentation to lactate; (S)-lactate from pyruvate: step 1/1. Its activity is regulated as follows. Allosterically activated by fructose 1,6-bisphosphate (FBP). Catalyzes the conversion of lactate to pyruvate. This Thermus thermophilus (strain ATCC 27634 / DSM 579 / HB8) protein is L-lactate dehydrogenase.